We begin with the raw amino-acid sequence, 360 residues long: Phenylalanine--tRNA ligase alpha subunit (360 aa).

Mg(2+) is bound at residue Glu264.

Belongs to the class-II aminoacyl-tRNA synthetase family. Phe-tRNA synthetase alpha subunit type 1 subfamily. In terms of assembly, tetramer of two alpha and two beta subunits. The cofactor is Mg(2+).

Its subcellular location is the cytoplasm. The enzyme catalyses tRNA(Phe) + L-phenylalanine + ATP = L-phenylalanyl-tRNA(Phe) + AMP + diphosphate + H(+). The polypeptide is Phenylalanine--tRNA ligase alpha subunit (Streptomyces avermitilis (strain ATCC 31267 / DSM 46492 / JCM 5070 / NBRC 14893 / NCIMB 12804 / NRRL 8165 / MA-4680)).